The sequence spans 100 residues: Urease subunit gamma (100 aa).

The protein belongs to the urease gamma subunit family. Heterotrimer of UreA (gamma), UreB (beta) and UreC (alpha) subunits. Three heterotrimers associate to form the active enzyme.

The protein resides in the cytoplasm. It catalyses the reaction urea + 2 H2O + H(+) = hydrogencarbonate + 2 NH4(+). It participates in nitrogen metabolism; urea degradation; CO(2) and NH(3) from urea (urease route): step 1/1. The chain is Urease subunit gamma from Ralstonia pickettii (strain 12J).